We begin with the raw amino-acid sequence, 500 residues long: Protein psiE (500 aa).

Positions 1–18 (MKLISVLITFLLATVIYS) are cleaved as a signal peptide. A glycan (N-linked (GlcNAc...) asparagine) is linked at asparagine 59. The region spanning 114 to 256 (TYDTTRKIYV…KDYCGVCQGD (143 aa)) is the PA14 domain. N-linked (GlcNAc...) asparagine glycosylation is found at asparagine 314, asparagine 341, asparagine 366, asparagine 420, and asparagine 469.

It belongs to the prespore-cell-inducing factor family.

Its subcellular location is the secreted. This Dictyostelium discoideum (Social amoeba) protein is Protein psiE (psiE).